The sequence spans 158 residues: Inner membrane assembly complex subunit 17 (158 aa).

The N-terminal 15 residues, 1-15, are a transit peptide targeting the mitochondrion; that stretch reads MFRPLVKRVVTRRFL. The Mitochondrial matrix portion of the chain corresponds to 16–85; that stretch reads AAANNSNAHI…KTQETSLKKF (70 aa). A helical membrane pass occupies residues 86–108; sequence VRPAWIFLLMGSIVYLSCHYVWW. Residues 109–158 are Mitochondrial intermembrane-facing; it reads KLDYEEKELEYTHKVHQLESELAALNEAHNSSVSSDKNSKRSSRKWYKFW. Positions 110-140 form a coiled coil; the sequence is LDYEEKELEYTHKVHQLESELAALNEAHNSS.

It belongs to the INA17 family. Component of the inner membrane assembly (INA) complex, composed of INA17 and INA22. Interacts with a subset of F(1)F(0)-ATP synthase subunits of the F(1)-domain and the peripheral stalk.

Its subcellular location is the mitochondrion inner membrane. Its function is as follows. Component of the INA complex (INAC) that promotes the biogenesis of mitochondrial F(1)F(0)-ATP synthase. INAC facilitates the assembly of the peripheral stalk and promotes the assembly of the catalytic F(1)-domain with the membrane-embedded F(0)-domain. This Kluyveromyces lactis (strain ATCC 8585 / CBS 2359 / DSM 70799 / NBRC 1267 / NRRL Y-1140 / WM37) (Yeast) protein is Inner membrane assembly complex subunit 17.